Reading from the N-terminus, the 221-residue chain is ATP phosphoribosyltransferase (221 aa).

This sequence belongs to the ATP phosphoribosyltransferase family. Short subfamily. Heteromultimer composed of HisG and HisZ subunits.

The protein resides in the cytoplasm. The catalysed reaction is 1-(5-phospho-beta-D-ribosyl)-ATP + diphosphate = 5-phospho-alpha-D-ribose 1-diphosphate + ATP. Its pathway is amino-acid biosynthesis; L-histidine biosynthesis; L-histidine from 5-phospho-alpha-D-ribose 1-diphosphate: step 1/9. Catalyzes the condensation of ATP and 5-phosphoribose 1-diphosphate to form N'-(5'-phosphoribosyl)-ATP (PR-ATP). Has a crucial role in the pathway because the rate of histidine biosynthesis seems to be controlled primarily by regulation of HisG enzymatic activity. The polypeptide is ATP phosphoribosyltransferase (Rhizorhabdus wittichii (strain DSM 6014 / CCUG 31198 / JCM 15750 / NBRC 105917 / EY 4224 / RW1) (Sphingomonas wittichii)).